Here is a 436-residue protein sequence, read N- to C-terminus: MTKPIVAIVGKPNVGKSTIFNRVVGERISIVEDTPGVTRDRIYSSGEWLTHEFNIIDTGGIEIGDAPFQTQIRAQAEIAIEEADVIIFMVNVREGLTQSDEMVAQMLYKSKKPVVLAVNKVDNLEMRNDIYDFYSLGFGDPYPISGSHGLGLGDLLDAVVENFNKESEDPYDEDTIRLSIIGRPNVGKSSLVNAILGEERVIVSNVAGTTRDAIDTEYSYDGQDYVLIDTAGMRKKGKVYESTEKYSVLRALKAIERSEVVLVVIDAEQGIIEQDKRVAGYAHEEGKAIVIVVNKWDTVEKDSKTMKKFTDDVRNEFQFLDYAQIAFVSAKEGLRLKTLFPYINQASENHKKRVQSSTLNEVVTDAISMNPTPTDKGRRLNVFYTTQVAIEPPTFVVFVNDVELMHFSYRRYLENQIRNAFGFEGTPIHIIPRKRN.

2 consecutive EngA-type G domains span residues 4-167 (PIVA…NKES) and 176-351 (IRLS…ENHK). GTP-binding positions include 10 to 17 (GKPNVGKS), 57 to 61 (DTGGI), 119 to 122 (NKVD), 182 to 189 (GRPNVGKS), 229 to 233 (DTAGM), and 294 to 297 (NKWD). The KH-like domain maps to 352–436 (KRVQSSTLNE…PIHIIPRKRN (85 aa)).

Belongs to the TRAFAC class TrmE-Era-EngA-EngB-Septin-like GTPase superfamily. EngA (Der) GTPase family. In terms of assembly, associates with the 50S ribosomal subunit.

Its function is as follows. GTPase that plays an essential role in the late steps of ribosome biogenesis. This chain is GTPase Der, found in Staphylococcus epidermidis (strain ATCC 35984 / DSM 28319 / BCRC 17069 / CCUG 31568 / BM 3577 / RP62A).